A 128-amino-acid polypeptide reads, in one-letter code: uncharacterized protein (128 aa).

The disordered stretch occupies residues 25–61; it reads LPNRLPEGSTVGPKPDSSWEAGSQGNWGLTSSGAGQD. Polar residues predominate over residues 44-61; sequence EAGSQGNWGLTSSGAGQD.

This is an uncharacterized protein from Homo sapiens (Human).